Consider the following 1450-residue polypeptide: MDREVHRMASLRREGSMWRSGGDVFSRSSSRFQDEDDDEEALRWAALERLPTYDRVRRGILAVSSEDGGAGGEKVEVDVGRLGARESRALIERLVRAADDDHERFLLKLRERMDRVGIDYPTIEVRFENLEVEADVHVGNRGLPTLLNSVTNTVEAIGNALHILPNKKQPMTVLHDVSGIIKPRRMTLLLGPPGSGKTTLLLALAGKLDKDLKVSGKVTYNGHGMHEFVPERTAAYISQHDLHIGEMTVRETLAFSARCQGVGTRYEMLTELARREKAANIKPDHDIDIYMKASAMGGQESSVVTDYILKILGLDICADTVVGNEMLRGISGGQRKRVTTGEMLVGPARALFMDEISTGLDSSTTYQIVNSLRQTIHILGGTAVISLLQPAPETYNLFDDIILLSDGQVVYQGPREHVLEFFEFMGFRCPARKGVADFLQEVTSRKDQGQYWCRRDRPYRFVPVKQFADAFRSFHVGRSIQNELSEPFDRTRSHPAALATSKYGVSRKELLKATIDRELLLMKRNAFMYIFKAVNLTLMALIVMTTFFRTSMRHDRDYGMIYLGALYFALDTVMFNGFAELAMTVMKLPVFFKQRDLLFFPAWAYTIPSWILQIPITFLEVGVYVFITYYVIGFDPSVSRFFKQYLLLLALNQMSSALFRFIAGIGRDMVVSHTFGPLSLLAFAALGGFILARPDVKKWWIWGYWISPLSYAQNAISTNEFLGHSWSQILPGENVTLGVSVLKSRGIFTEAKWYWIGLGALLGYTLLFNLLYTVALSVLSPFTDSHASMSEDALKEKHANLTGEVVEGQKDTKSRKQELELSHIADQNSGINSADSSASRKGMVLPFAPLSISFNDVRYSVDMPEAMKAQGITEDRLLLLKGVSGSFRPGVLTALMGVSGAGKTTLMDVLAGRKTGGYIEGDIRISGYPKKQETFARISGYCEQNDIHSPHVTVYESLVFSAWLRLPSEVDSEARKMFIEEVMDLVELTSLRGALVGLPGVSGLSTEQRKRLTIAVELVANPSIIFMDEPTSGLDARAAAIVMRTVRNTVNTGRTVVCTIHQPSIDIFEAFDELFLMKRGGEEIYVGPVGQNSSKLIEYFEGIDGVSRIKDGYNPATWMLEVTSSAQEEMLGVDFSEIYRQSELYQRNKELIEELSTPPPGSTDLNFPTQYSRSFITQCLACLWKQNWSYWRNPSYTAVRLLFTIVIALMFGTMFWNLGTRTKKQQDLFNAMGSMYAAVLYIGVQNSGSVQPVVVVERTVFYRERAAGMYSAFPYAFGQVAIELPYIMVQTLIYGVLVYSMIGFEWTVAKFLWYLFFMYFTLLYFTFYGMMAVGLTPNESIAAIISSAFYNVWNLFSGYLIPRPKIPVWWRWYCWICPVAWTLYGLVASQFGDIQHVLEGDTRTVAQFVTDYFGFHHNFLWVVAVVHVVFAVTFAFLFSFAIMKFNFQRR.

In terms of domain architecture, ABC transporter 1 spans 158–431; sequence GNALHILPNK…FEFMGFRCPA (274 aa). 191-198 is a binding site for ATP; the sequence is GPPGSGKT. Residues 509-721 form the ABC transmembrane type-2 1 domain; that stretch reads ELLKATIDRE…AQNAISTNEF (213 aa). 6 consecutive transmembrane segments (helical) span residues 527 to 547, 559 to 579, 614 to 634, 646 to 666, 670 to 690, and 756 to 776; these read FMYI…MTTF, GMIY…NGFA, IPIT…VIGF, LLLL…AGIG, VVSH…GGFI, and IGLG…TVAL. The ABC transporter 2 domain occupies 852–1104; it reads ISFNDVRYSV…KLIEYFEGID (253 aa). 897-904 contacts ATP; the sequence is GVSGAGKT. The region spanning 1177–1391 is the ABC transmembrane type-2 2 domain; it reads TQCLACLWKQ…TLYGLVASQF (215 aa). Helical transmembrane passes span 1198 to 1218, 1236 to 1256, 1284 to 1304, 1311 to 1331, 1341 to 1361, 1372 to 1392, and 1422 to 1442; these read AVRL…FWNL, YAAV…VVVV, LPYI…MIGF, FLWY…YGMM, IAAI…GYLI, WYCW…SQFG, and VVAV…SFAI.

Belongs to the ABC transporter superfamily. ABCG family. PDR (TC 3.A.1.205) subfamily.

It localises to the membrane. Its function is as follows. May be a general defense protein. This is ABC transporter G family member 37 from Oryza sativa subsp. japonica (Rice).